We begin with the raw amino-acid sequence, 380 residues long: Transaldolase (380 aa).

The active-site Schiff-base intermediate with substrate is the Lys141.

Belongs to the transaldolase family. Type 2 subfamily.

It is found in the cytoplasm. It carries out the reaction D-sedoheptulose 7-phosphate + D-glyceraldehyde 3-phosphate = D-erythrose 4-phosphate + beta-D-fructose 6-phosphate. It participates in carbohydrate degradation; pentose phosphate pathway; D-glyceraldehyde 3-phosphate and beta-D-fructose 6-phosphate from D-ribose 5-phosphate and D-xylulose 5-phosphate (non-oxidative stage): step 2/3. Its function is as follows. Transaldolase is important for the balance of metabolites in the pentose-phosphate pathway. This is Transaldolase from Trichodesmium erythraeum (strain IMS101).